The chain runs to 132 residues: Fluoride-specific ion channel FluC (132 aa).

Transmembrane regions (helical) follow at residues 6–26, 41–61, 73–93, and 104–124; these read VLQLIAVGFGGALGAMARFIV, GTLVVNSLGSFAIGLIMILMI, FLIVGFLGAFTTFSTFSFETY, and AMLNIGVSVLTGLFAVWLGIW. Positions 80 and 83 each coordinate Na(+).

The protein belongs to the fluoride channel Fluc/FEX (TC 1.A.43) family.

The protein localises to the cell inner membrane. The catalysed reaction is fluoride(in) = fluoride(out). Na(+) is not transported, but it plays an essential structural role and its presence is essential for fluoride channel function. Functionally, fluoride-specific ion channel. Important for reducing fluoride concentration in the cell, thus reducing its toxicity. The polypeptide is Fluoride-specific ion channel FluC (Hydrogenovibrio crunogenus (strain DSM 25203 / XCL-2) (Thiomicrospira crunogena)).